A 203-amino-acid chain; its full sequence is Elongation factor Ts (203 aa).

The involved in Mg(2+) ion dislocation from EF-Tu stretch occupies residues 80–83 (TDFV).

Belongs to the EF-Ts family.

Its subcellular location is the cytoplasm. Associates with the EF-Tu.GDP complex and induces the exchange of GDP to GTP. It remains bound to the aminoacyl-tRNA.EF-Tu.GTP complex up to the GTP hydrolysis stage on the ribosome. The sequence is that of Elongation factor Ts from Moorella thermoacetica (strain ATCC 39073 / JCM 9320).